A 195-amino-acid polypeptide reads, in one-letter code: dTTP/UTP pyrophosphatase (195 aa).

Residue D77 is the Proton acceptor of the active site.

The protein belongs to the Maf family. YhdE subfamily. Requires a divalent metal cation as cofactor.

It localises to the cytoplasm. It catalyses the reaction dTTP + H2O = dTMP + diphosphate + H(+). The enzyme catalyses UTP + H2O = UMP + diphosphate + H(+). In terms of biological role, nucleoside triphosphate pyrophosphatase that hydrolyzes dTTP and UTP. May have a dual role in cell division arrest and in preventing the incorporation of modified nucleotides into cellular nucleic acids. The chain is dTTP/UTP pyrophosphatase from Flavobacterium psychrophilum (strain ATCC 49511 / DSM 21280 / CIP 103535 / JIP02/86).